Reading from the N-terminus, the 140-residue chain is Nucleoside diphosphate kinase (140 aa).

ATP is bound by residues Lys-11, Phe-59, Arg-87, Thr-93, Arg-104, and Asn-114. Catalysis depends on His-117, which acts as the Pros-phosphohistidine intermediate.

Belongs to the NDK family. As to quaternary structure, homotetramer. Mg(2+) is required as a cofactor.

It localises to the cytoplasm. It carries out the reaction a 2'-deoxyribonucleoside 5'-diphosphate + ATP = a 2'-deoxyribonucleoside 5'-triphosphate + ADP. The catalysed reaction is a ribonucleoside 5'-diphosphate + ATP = a ribonucleoside 5'-triphosphate + ADP. Its function is as follows. Major role in the synthesis of nucleoside triphosphates other than ATP. The ATP gamma phosphate is transferred to the NDP beta phosphate via a ping-pong mechanism, using a phosphorylated active-site intermediate. The polypeptide is Nucleoside diphosphate kinase (Rickettsia peacockii (strain Rustic)).